We begin with the raw amino-acid sequence, 94 residues long: Small ubiquitin-related modifier 3-like (94 aa).

Residue lysine 11 forms a Glycyl lysine isopeptide (Lys-Gly) (interchain with G-Cter in SUMO) linkage. Residues 15 to 92 form the Ubiquitin-like domain; sequence DHINLKVAGQ…IDVFQQQTGG (78 aa). A Glycyl lysine isopeptide (Gly-Lys) (interchain with K-? in acceptor proteins) cross-link involves residue glycine 92. A propeptide spanning residues 93 to 94 is cleaved from the precursor; the sequence is SC.

Belongs to the ubiquitin family. SUMO subfamily. In terms of assembly, interacts with sae2 and ube2i. Covalently attached to a number of proteins. In terms of processing, polymeric chains can be formed through Lys-11 cross-linking. Cleavage of precursor form by a sentrin-specific protease is necessary for function.

The protein localises to the cytoplasm. It is found in the nucleus. The protein resides in the PML body. Functionally, ubiquitin-like protein which can be covalently attached to target lysines either as a monomer or as a lysine-linked polymer. Does not seem to be involved in protein degradation and may function as an antagonist of ubiquitin in the degradation process. Plays a role in a number of cellular processes such as nuclear transport, DNA replication and repair, mitosis and signal transduction. Covalent attachment to its substrates requires prior activation by the E1 complex sae1-sae2 and linkage to the E2 enzyme ube2i. The chain is Small ubiquitin-related modifier 3-like (sumo3l) from Danio rerio (Zebrafish).